We begin with the raw amino-acid sequence, 340 residues long: Ketol-acid reductoisomerase (NADP(+)) (340 aa).

The KARI N-terminal Rossmann domain occupies 3–183 (INVYYDKDCD…GGGRTGIIET (181 aa)). Residues 26-29 (FGSQ), serine 54, and 84-87 (DELQ) contribute to the NADP(+) site. Histidine 109 is a catalytic residue. Glycine 135 is an NADP(+) binding site. Residues 184-329 (TFKDETETDL…KKLRAMMPWI (146 aa)) form the KARI C-terminal knotted domain. Residues aspartate 192, glutamate 196, glutamate 228, and glutamate 232 each coordinate Mg(2+). Residue serine 253 participates in substrate binding.

The protein belongs to the ketol-acid reductoisomerase family. It depends on Mg(2+) as a cofactor.

The catalysed reaction is (2R)-2,3-dihydroxy-3-methylbutanoate + NADP(+) = (2S)-2-acetolactate + NADPH + H(+). It carries out the reaction (2R,3R)-2,3-dihydroxy-3-methylpentanoate + NADP(+) = (S)-2-ethyl-2-hydroxy-3-oxobutanoate + NADPH + H(+). Its pathway is amino-acid biosynthesis; L-isoleucine biosynthesis; L-isoleucine from 2-oxobutanoate: step 2/4. It participates in amino-acid biosynthesis; L-valine biosynthesis; L-valine from pyruvate: step 2/4. Its function is as follows. Involved in the biosynthesis of branched-chain amino acids (BCAA). Catalyzes an alkyl-migration followed by a ketol-acid reduction of (S)-2-acetolactate (S2AL) to yield (R)-2,3-dihydroxy-isovalerate. In the isomerase reaction, S2AL is rearranged via a Mg-dependent methyl migration to produce 3-hydroxy-3-methyl-2-ketobutyrate (HMKB). In the reductase reaction, this 2-ketoacid undergoes a metal-dependent reduction by NADPH to yield (R)-2,3-dihydroxy-isovalerate. The sequence is that of Ketol-acid reductoisomerase (NADP(+)) from Campylobacter concisus (strain 13826).